We begin with the raw amino-acid sequence, 72 residues long: UPF0154 protein BLi02038/BL02936 (72 aa).

A helical transmembrane segment spans residues Trp-4 to Ile-24.

This sequence belongs to the UPF0154 family.

The protein localises to the cell membrane. This chain is UPF0154 protein BLi02038/BL02936, found in Bacillus licheniformis (strain ATCC 14580 / DSM 13 / JCM 2505 / CCUG 7422 / NBRC 12200 / NCIMB 9375 / NCTC 10341 / NRRL NRS-1264 / Gibson 46).